The primary structure comprises 372 residues: Cytochrome b (372 aa).

4 consecutive transmembrane segments (helical) span residues 25–45 (FGSMLLTCLMLQITTGFFLAI), 69–90 (WIMQNLHAISASMFFICIYIHI), 105–125 (WLSGTALLITLMATAFFGYVL), and 170–190 (FFALHFILPFAIMALSSIHII). Heme b is bound by residues His75 and His89. Heme b-binding residues include His174 and His188. His193 serves as a coordination point for a ubiquinone. 4 helical membrane passes run 218-238 (YKDMLMFTSMITLLFITLSFS), 280-300 (LGGALALLMSVMILTTVPFTH), 312-332 (LSQILFWTLMATFITITWTAS), and 339-358 (FISISQTTSIFYFSFFITIP).

It belongs to the cytochrome b family. The cytochrome bc1 complex contains 3 respiratory subunits (MT-CYB, CYC1 and UQCRFS1), 2 core proteins (UQCRC1 and UQCRC2) and probably 6 low-molecular weight proteins. Heme b serves as cofactor.

It is found in the mitochondrion inner membrane. Its function is as follows. Component of the ubiquinol-cytochrome c reductase complex (complex III or cytochrome b-c1 complex) that is part of the mitochondrial respiratory chain. The b-c1 complex mediates electron transfer from ubiquinol to cytochrome c. Contributes to the generation of a proton gradient across the mitochondrial membrane that is then used for ATP synthesis. This is Cytochrome b (MT-CYB) from Naja annulata annulata (Banded water cobra).